Here is a 282-residue protein sequence, read N- to C-terminus: tRNA (guanine-N(1)-)-methyltransferase (282 aa).

The interval 77–114 (TGPAATVSDLESSAEHKRNLRPATTNGDAEPLGEKAGG) is disordered. Residues G149 and 173–178 (IGDYVL) contribute to the S-adenosyl-L-methionine site.

Belongs to the RNA methyltransferase TrmD family. In terms of assembly, homodimer.

The protein localises to the cytoplasm. It carries out the reaction guanosine(37) in tRNA + S-adenosyl-L-methionine = N(1)-methylguanosine(37) in tRNA + S-adenosyl-L-homocysteine + H(+). Its function is as follows. Specifically methylates guanosine-37 in various tRNAs. This Corynebacterium jeikeium (strain K411) protein is tRNA (guanine-N(1)-)-methyltransferase.